A 160-amino-acid polypeptide reads, in one-letter code: Cyclic pyranopterin monophosphate synthase (160 aa).

Residues 75–77 (LCH) and 113–114 (ME) contribute to the substrate site. Aspartate 128 is an active-site residue.

Belongs to the MoaC family. Homohexamer; trimer of dimers.

It carries out the reaction (8S)-3',8-cyclo-7,8-dihydroguanosine 5'-triphosphate = cyclic pyranopterin phosphate + diphosphate. The protein operates within cofactor biosynthesis; molybdopterin biosynthesis. Its function is as follows. Catalyzes the conversion of (8S)-3',8-cyclo-7,8-dihydroguanosine 5'-triphosphate to cyclic pyranopterin monophosphate (cPMP). In Beijerinckia indica subsp. indica (strain ATCC 9039 / DSM 1715 / NCIMB 8712), this protein is Cyclic pyranopterin monophosphate synthase.